The sequence spans 415 residues: Probable glucan 1,3-beta-glucosidase A (415 aa).

The signal sequence occupies residues 1 to 22 (MLSRLSQTALVALSLMTVLTEA). The Proton donor role is filled by Glu-210. Cystine bridges form between Cys-290–Cys-414 and Cys-315–Cys-341. Glu-307 acts as the Nucleophile in catalysis. A disordered region spans residues 335–359 (SPRYGDCGNKRQGSSSGLSEQERSD).

It belongs to the glycosyl hydrolase 5 (cellulase A) family. As to quaternary structure, monomer. It depends on Mn(2+) as a cofactor.

It localises to the secreted. It carries out the reaction Successive hydrolysis of beta-D-glucose units from the non-reducing ends of (1-&gt;3)-beta-D-glucans, releasing alpha-glucose.. Its function is as follows. Beta-glucanases participate in the metabolism of beta-glucan, the main structural component of the cell wall. It could also function biosynthetically as a transglycosylase. The sequence is that of Probable glucan 1,3-beta-glucosidase A (exgA) from Aspergillus clavatus (strain ATCC 1007 / CBS 513.65 / DSM 816 / NCTC 3887 / NRRL 1 / QM 1276 / 107).